Consider the following 79-residue polypeptide: Hematopoietic cell signal transducer (79 aa).

An N-terminal signal peptide occupies residues 1 to 17 (MDPPGYLLFLLLLPVAA). At 18–35 (SQTSAGSCSGCGTLSLPL) the chain is on the extracellular side. Residues 36-56 (LAGLVAADAVMSLLIVGVVFV) form a helical membrane-spanning segment. Topologically, residues 57 to 79 (CMRPHGRPAQEDGRVYINMPGRG) are cytoplasmic. The residue at position 72 (Y72) is a Phosphotyrosine. The GRB2 binding site stretch occupies residues 72-74 (YIN). The interval 72 to 75 (YINM) is PIK3R1 binding site.

Belongs to the DAP10 family. As to quaternary structure, homodimer; Disulfide-linked. Interacts with KLRK1 to form a stable complex, which results in surface expression of both proteins, whereas alone, it is minimally expressed. Interacts with PIK3R1 and GRB2. Interacts with CLEC5A. Forms an CLEC5A/TYROBP/HCST trimolecular complex depending almost solely on TYROBP. Heterohexamer composed of four subunits of HCST/DAP10 and two subunits of KLRK1. Interacts (via transmembrane domain) with KLRK1 isoform 1 (via transmembrane domain); the interaction is required for KLRK1 cell surface expression on naive NK cells and activated CD8(+) T-cells, but is dispensable on activated TYROBP-expressing NK cells. Interacts (via transmembrane domain) with KLRK1 isoform 2 (via transmembrane domain); the interaction is required for KLRK1 NK cell surface expression and induces NK cell-mediated cytotoxicity. Interacts with CD300H. Phosphorylated; PIK3R1 and GRB2 associate specifically with tyrosine-phosphorylated HCST. Post-translationally, O-glycosylated.

It is found in the membrane. Its function is as follows. Transmembrane adapter protein which associates with KLRK1 to form an activation receptor KLRK1-HCST in lymphoid and myeloid cells; this receptor plays a major role in triggering cytotoxicity against target cells expressing cell surface ligands such as MHC class I chain-related MICA and MICB, and UL16-binding proteins (ULBPs); these ligands are up-regulated by stress conditions and pathological state such as viral infection and tumor transformation. Functions as a docking site for PI3-kinase PIK3R1 and GRB2. Interaction of ULBPs with KLRK1-HCST triggers calcium mobilization and activation of the PIK3R1, MAP2K/ERK, and JAK2/STAT5 signaling pathways. Both PIK3R1 and GRB2 are required for full KLRK1-HCST-mediated activation and ultimate killing of target cells. In NK cells, KLRK1-HCST signaling directly induces cytotoxicity and enhances cytokine production initiated via DAP12/TYROBP-associated receptors. In T-cells, it provides primarily costimulation for TCR-induced signals. KLRK1-HCST receptor plays a role in immune surveillance against tumors and is required for cytolysis of tumors cells; indeed, melanoma cells that do not express KLRK1 ligands escape from immune surveillance mediated by NK cells. This chain is Hematopoietic cell signal transducer (Hcst), found in Mus musculus (Mouse).